Consider the following 178-residue polypeptide: Large ribosomal subunit protein eL20w (178 aa).

This sequence belongs to the eukaryotic ribosomal protein eL20 family.

This Arabidopsis thaliana (Mouse-ear cress) protein is Large ribosomal subunit protein eL20w (RPL18AD).